The chain runs to 444 residues: Protein phosphatase 2C homolog C10F6.17c (444 aa).

In terms of domain architecture, PPM-type phosphatase spans Arg-85–Phe-439. Asp-121, Gly-122, and Asp-344 together coordinate Mn(2+).

It belongs to the PP2C family. Requires Mg(2+) as cofactor. The cofactor is Mn(2+).

It localises to the mitochondrion. The catalysed reaction is O-phospho-L-seryl-[protein] + H2O = L-seryl-[protein] + phosphate. It carries out the reaction O-phospho-L-threonyl-[protein] + H2O = L-threonyl-[protein] + phosphate. In terms of biological role, involved in regulation of pyruvate dehydrogenase activity. This Schizosaccharomyces pombe (strain 972 / ATCC 24843) (Fission yeast) protein is Protein phosphatase 2C homolog C10F6.17c.